The sequence spans 186 residues: ATP synthase subunit delta (186 aa).

This sequence belongs to the ATPase delta chain family. F-type ATPases have 2 components, F(1) - the catalytic core - and F(0) - the membrane proton channel. F(1) has five subunits: alpha(3), beta(3), gamma(1), delta(1), epsilon(1). F(0) has three main subunits: a(1), b(2) and c(10-14). The alpha and beta chains form an alternating ring which encloses part of the gamma chain. F(1) is attached to F(0) by a central stalk formed by the gamma and epsilon chains, while a peripheral stalk is formed by the delta and b chains.

It is found in the cell inner membrane. Functionally, f(1)F(0) ATP synthase produces ATP from ADP in the presence of a proton or sodium gradient. F-type ATPases consist of two structural domains, F(1) containing the extramembraneous catalytic core and F(0) containing the membrane proton channel, linked together by a central stalk and a peripheral stalk. During catalysis, ATP synthesis in the catalytic domain of F(1) is coupled via a rotary mechanism of the central stalk subunits to proton translocation. This protein is part of the stalk that links CF(0) to CF(1). It either transmits conformational changes from CF(0) to CF(1) or is implicated in proton conduction. The chain is ATP synthase subunit delta from Brucella melitensis biotype 2 (strain ATCC 23457).